Here is a 687-residue protein sequence, read N- to C-terminus: Complement C1s subcomponent (687 aa).

The N-terminal stretch at 1–15 is a signal peptide; sequence MWCIVLLSLLAWVDA. The 115-residue stretch at 16–130 folds into the CUB 1 domain; the sequence is EPTMYGEILS…TGFAAYYVAV (115 aa). 6 residues coordinate Ca(2+): Glu-60, Asp-68, Asp-113, Asp-131, Val-132, and Glu-134. The cysteines at positions 65 and 83 are disulfide-linked. Residues 131 to 172 enclose the EGF-like; calcium-binding domain; the sequence is DVNECTDFADSPCSHFCNNYIGGYFCSCPPEYFLHEDKKNCG. Cystine bridges form between Cys-135/Cys-147, Cys-143/Cys-156, and Cys-158/Cys-171. The Ca(2+) site is built by Asn-149, Tyr-150, and Gly-153. Asn-149 is subject to (3R)-3-hydroxyasparagine. N-linked (GlcNAc...) asparagine glycosylation is present at Asn-174. Disulfide bonds link Cys-175-Cys-202, Cys-234-Cys-251, Cys-294-Cys-341, Cys-321-Cys-354, Cys-359-Cys-403, Cys-386-Cys-421, Cys-425-Cys-548, Cys-594-Cys-617, and Cys-626-Cys-658. Positions 175–290 constitute a CUB 2 domain; that stretch reads CSGDVFTTLI…KGWKFRYHGD (116 aa). Sushi domains lie at 292 to 356 and 357 to 423; these read IPCP…RCQP and VDCG…KCVP. N-linked (GlcNAc...) asparagine glycosylation occurs at Asn-406. The Peptidase S1 domain occupies 438–679; the sequence is IFGGIITKIE…YIDWIRETMQ (242 aa). Active-site charge relay system residues include His-475 and Asp-528. Catalysis depends on Ser-630, which acts as the Charge relay system.

Belongs to the peptidase S1 family. As to quaternary structure, C1 is a calcium-dependent trimolecular complex of C1q, C1r and C1s in the molar ration of 1:2:2. Activated C1s is an disulfide-linked heterodimer of a heavy chain and a light chain. The iron and 2-oxoglutarate dependent 3-hydroxylation of aspartate and asparagine is (R) stereospecific within EGF domains.

The enzyme catalyses Cleavage of Arg-|-Ala bond in complement component C4 to form C4a and C4b, and Lys(or Arg)-|-Lys bond in complement component C2 to form C2a and C2b: the 'classical' pathway C3 convertase.. Its activity is regulated as follows. Inhibited by SERPING1. Functionally, C1s B chain is a serine protease that combines with C1q and C1r to form C1, the first component of the classical pathway of the complement system. C1r activates C1s so that it can, in turn, activate C2 and C4. Also cleaves IGFBP5 and thereby inhibits the trophic effects of IGF1. The sequence is that of Complement C1s subcomponent from Sus scrofa (Pig).